A 600-amino-acid chain; its full sequence is Melanophilin (600 aa).

Residues 4–124 form the RabBD domain; the sequence is KLDLSKLTDE…IGSLEWYYEH (121 aa). Residues 64-107 form an FYVE-type zinc finger; the sequence is CARCLQPYQLLVNSKRQCLECGLFTCKSCGRVHPEEQGWICDPC. Disordered stretches follow at residues 146-277, 390-465, 499-541, and 553-600; these read QGGA…AELC, EELT…LSEL, TVKP…AKAM, and NSLK…AHQS. 2 stretches are compositionally biased toward basic and acidic residues: residues 232-243 and 409-420; these read CSEKAAPHKAEG and KDEKAEPNRDKS. Residues 373–496 are a coiled coil; sequence GVRTEADVEE…ESRIAALRAA (124 aa). Residues 558-569 show a composition bias toward basic and acidic residues; it reads QGKDDDSFDRKS.

As to quaternary structure, binds RAB27A that has been activated by GTP-binding via its N-terminus. Binds MYO5A via its C-terminal coiled coil domain.

The protein localises to the cytoplasm. Its function is as follows. Rab effector protein involved in melanosome transport. Serves as link between melanosome-bound RAB27A and the motor protein MYO5A. In Homo sapiens (Human), this protein is Melanophilin (MLPH).